The following is a 1023-amino-acid chain: Vacuolar membrane protease (1023 aa).

Residues 1–80 lie on the Cytoplasmic side of the membrane; it reads MRAAGCGGTG…FFRSVFGYRK (80 aa). A compositionally biased stretch (polar residues) spans 17 to 48; the sequence is KLSRSISQHQPKSMPQASVNSEQNPSVPNSPS. Residues 17–59 form a disordered region; it reads KLSRSISQHQPKSMPQASVNSEQNPSVPNSPSAHKPARSQSAQ. A helical transmembrane segment spans residues 81 to 101; that stretch reads TSLTFLVALVFAATLLLSWAD. The Vacuolar segment spans residues 102 to 425; that stretch reads SSLDFSVDMP…VVFSVSQVVS (324 aa). 2 N-linked (GlcNAc...) asparagine glycosylation sites follow: N170 and N200. 2 residues coordinate Zn(2+): H214 and D226. Residue E259 is the Proton acceptor of the active site. Residues E260, E285, and H357 each contribute to the Zn(2+) site. A helical transmembrane segment spans residues 426-446; it reads ANIALLVVVPVASLLLLFIIF. At 447–461 the chain is on the cytoplasmic side; it reads RCNKGWGFNFVNAIK. Residues 462–482 traverse the membrane as a helical segment; it reads YPLSLVASVLVLTFVSQVIIV. The Vacuolar portion of the chain corresponds to 483–491; it reads PSNPFLVNS. The N-linked (GlcNAc...) asparagine glycan is linked to N490. The helical transmembrane segment at 492 to 512 threads the bilayer; that stretch reads SIGLLVATLFSLFLLLNYIVL. At 513-529 the chain is on the cytoplasmic side; the sequence is NGLNLVFKSFKGHQHDE. A helical membrane pass occupies residues 530–550; that stretch reads KLIVMCESSFLTWILLLWSTV. Topologically, residues 551–564 are vacuolar; the sequence is KLSHNKFGDDHTGE. The chain crosses the membrane as a helical span at residues 565–585; it reads LFIPILFSLQAVACFLGFLGW. The Cytoplasmic segment spans residues 586–643; the sequence is CFKPSKKVKVSREEHQPLLSSNGSNYGTQDDDDSLAPSSSLSLQSGFSENCEVHETKS. Positions 604-613 are enriched in polar residues; sequence LSSNGSNYGT. The segment at 604-626 is disordered; that stretch reads LSSNGSNYGTQDDDDSLAPSSSL. The chain crosses the membrane as a helical span at residues 644–664; sequence FSYDWLVQFLVIVPISSLIIF. At 665–687 the chain is on the vacuolar side; that stretch reads NSGSLILNGLNKSIQESLSAQNL. Residue N675 is glycosylated (N-linked (GlcNAc...) asparagine). The helical transmembrane segment at 688–708 threads the bilayer; sequence IYKFIQIFVIVWSIPFLPFIF. The Cytoplasmic portion of the chain corresponds to 709-712; that stretch reads KLNR. A helical membrane pass occupies residues 713–733; sequence IIVLALSLVLLYGFFAVNITD. Topologically, residues 734-1023 are vacuolar; it reads AFNDANPLKL…MVSVTKYIEV (290 aa). 3 N-linked (GlcNAc...) asparagine glycosylation sites follow: N815, N858, and N892.

This sequence belongs to the peptidase M28 family. Zn(2+) is required as a cofactor.

It is found in the vacuole membrane. May be involved in vacuolar sorting and osmoregulation. The chain is Vacuolar membrane protease from Clavispora lusitaniae (strain ATCC 42720) (Yeast).